Reading from the N-terminus, the 495-residue chain is Cobyric acid synthase (495 aa).

Residues 250-444 (SLKISILRLP…LHGLFDNGAW (195 aa)) enclose the GATase cobBQ-type domain. Cys-331 acts as the Nucleophile in catalysis. Residue His-436 is part of the active site.

It belongs to the CobB/CobQ family. CobQ subfamily.

Its pathway is cofactor biosynthesis; adenosylcobalamin biosynthesis. Catalyzes amidations at positions B, D, E, and G on adenosylcobyrinic A,C-diamide. NH(2) groups are provided by glutamine, and one molecule of ATP is hydrogenolyzed for each amidation. The protein is Cobyric acid synthase of Rippkaea orientalis (strain PCC 8801 / RF-1) (Cyanothece sp. (strain PCC 8801)).